We begin with the raw amino-acid sequence, 209 residues long: uncharacterized protein (209 aa).

The next 3 helical transmembrane spans lie at 10-32 (AVVIILTRFMEAIAIIISIYLAF), 37-59 (LRYVLATAGVFLLSVLINLTGLI), and 64-86 (FIYFSLASIFLSALILTALILYV).

The protein resides in the cell membrane. This is an uncharacterized protein from Aquifex aeolicus (strain VF5).